We begin with the raw amino-acid sequence, 90 residues long: Histone H1.M6.2 (90 aa).

The segment at 1–90 is disordered; it reads MSDAAVPPKK…KAVKKAPKKK (90 aa). A compositionally biased stretch (basic residues) spans 11–90; sequence ASPKKAAAKK…KAVKKAPKKK (80 aa).

It localises to the nucleus. It is found in the chromosome. In Trypanosoma cruzi, this protein is Histone H1.M6.2.